Reading from the N-terminus, the 283-residue chain is Phospholipase C (283 aa).

The N-terminal stretch at 1–24 (MKKKVLALGAAITLVAPLQSVAFA) is a signal peptide. A propeptide spanning residues 25–38 (HENDGGQRFGVIPR) is cleaved from the precursor. Zn(2+) is bound by residues Trp-39, His-52, Asp-93, His-107, His-156, Asp-160, His-166, His-180, and Glu-184. A Zn-dependent PLC domain is found at 39–283 (WSAEDKHKEG…QLWFDTYGNR (245 aa)).

This sequence belongs to the bacterial zinc-metallophospholipase C family. Monomer. It depends on Zn(2+) as a cofactor.

It catalyses the reaction a 1,2-diacyl-sn-glycero-3-phosphocholine + H2O = phosphocholine + a 1,2-diacyl-sn-glycerol + H(+). Functionally, required, with sphingomyelinase, to effect target cell lysis (hemolysis). This is Phospholipase C (cerA) from Bacillus cereus.